We begin with the raw amino-acid sequence, 89 residues long: Large ribosomal subunit protein bL27 (89 aa).

Positions 1–21 (MAHKKAGGSSRNGRDSKGKRL) are disordered.

Belongs to the bacterial ribosomal protein bL27 family.

The chain is Large ribosomal subunit protein bL27 from Bradyrhizobium sp. (strain BTAi1 / ATCC BAA-1182).